A 407-amino-acid polypeptide reads, in one-letter code: Putative membrane protein 047R (407 aa).

The segment at Ile265–Ile337 is disordered. The span at Pro271 to Ile337 shows a compositional bias: pro residues. 2 helical membrane passes run Asn355 to Pro372 and Asn385 to Val403.

It belongs to the IIV-6 337L family.

Its subcellular location is the virion membrane. The sequence is that of Putative membrane protein 047R from Aedes vexans (Inland floodwater mosquito).